Reading from the N-terminus, the 226-residue chain is MVLARPDAVFAPARNRCHVSLPVNAMSLKMKVCNHVIMRHHHMHGRRYGRPGGWQQAQQPDASGAAEWFAGRLPEDWFDGDPTVIVDREEITVIGKLPGLESPEEESAARASGRVSRFRDETRPERMTIADEAQNRYGRKVSWGVEVGGERILFTHIAVPVMTRLKQPERQVLDTLVDAGVARSRSDALAWSVKLVGEHTEEWLAKLRTAMSAVDDLRAQGPDLPA.

This is an uncharacterized protein from Mycobacterium bovis (strain ATCC BAA-935 / AF2122/97).